The chain runs to 154 residues: Large ribosomal subunit protein uL22c (154 aa).

The protein belongs to the universal ribosomal protein uL22 family. In terms of assembly, part of the 50S ribosomal subunit.

It localises to the plastid. Its subcellular location is the chloroplast. This protein binds specifically to 23S rRNA. Its function is as follows. The globular domain of the protein is located near the polypeptide exit tunnel on the outside of the subunit, while an extended beta-hairpin is found that lines the wall of the exit tunnel in the center of the 70S ribosome. The protein is Large ribosomal subunit protein uL22c (rpl22) of Jasminum nudiflorum (Winter jasmine).